A 333-amino-acid chain; its full sequence is Probable endo-beta-1,4-glucanase B (333 aa).

Positions 1–17 (MKFRNLFFAAVAGSAVA) are cleaved as a signal peptide. Residues Asn37 and Asn100 are each glycosylated (N-linked (GlcNAc...) asparagine). Glu160 acts as the Proton donor in catalysis. The active-site Nucleophile is the Glu267.

The protein belongs to the glycosyl hydrolase 5 (cellulase A) family.

The protein resides in the secreted. The enzyme catalyses Endohydrolysis of (1-&gt;4)-beta-D-glucosidic linkages in cellulose, lichenin and cereal beta-D-glucans.. In terms of biological role, has endoglucanase activity on substrates containing beta-1,4 glycosidic bonds, like in carboxymethylcellulose (CMC), hydroxyethylcellulose (HEC) and beta-glucan. Involved in the degradation of complex natural cellulosic substrates. This Aspergillus oryzae (strain ATCC 42149 / RIB 40) (Yellow koji mold) protein is Probable endo-beta-1,4-glucanase B (eglB).